A 445-amino-acid chain; its full sequence is POU domain, class 5, transcription factor 1.2 (445 aa).

Polar residues-rich tracts occupy residues 76 to 88 (SANQLGISGQGNP) and 164 to 182 (IFTSSPDKSGESGISSLDN). 2 disordered regions span residues 76–116 (SANQ…PSLP) and 139–227 (TTVV…GEME). Positions 183-200 (SRCSSATSSSSGGTNVGT) are enriched in low complexity. Residues 218–292 (EEAPNSGEME…LLRSWLHEVE (75 aa)) enclose the POU-specific domain. Positions 312–371 (KRKHRTSIENNVKCTLENYFMQCSKPSAQEIAQIARELNMEKDVVRVWFCNRRQKGKRQV) form a DNA-binding region, homeobox.

It belongs to the POU transcription factor family. Class-5 subfamily. In terms of assembly, interacts with the transcription factors tcf7l1/tcf3 and vegt. In terms of tissue distribution, initially (stage 9) expressed in all regions of the embryo, becoming localized to the ventroposterior regions by early neurula stages. In adults, expressed at a low level in the brain.

Its subcellular location is the nucleus. Functionally, transcription factor that binds to the octamer motif (5'-ATTTGCAT-3'). Antagonizes the activity of nodal/activin signaling during gastrulation to suppress mesendoderm formation. The sequence is that of POU domain, class 5, transcription factor 1.2 (pou5f1.2) from Xenopus laevis (African clawed frog).